Here is a 368-residue protein sequence, read N- to C-terminus: Quinolinate synthase (368 aa).

The iminosuccinate site is built by His-46 and Ser-63. Cys-110 serves as a coordination point for [4Fe-4S] cluster. Iminosuccinate contacts are provided by residues 141–143 and Ser-162; that span reads YVN. Residue Cys-230 coordinates [4Fe-4S] cluster. Iminosuccinate-binding positions include 256-258 and Thr-273; that span reads HPE. Cys-320 lines the [4Fe-4S] cluster pocket.

The protein belongs to the quinolinate synthase family. Type 3 subfamily. The cofactor is [4Fe-4S] cluster.

Its subcellular location is the cytoplasm. It catalyses the reaction iminosuccinate + dihydroxyacetone phosphate = quinolinate + phosphate + 2 H2O + H(+). It participates in cofactor biosynthesis; NAD(+) biosynthesis; quinolinate from iminoaspartate: step 1/1. Its function is as follows. Catalyzes the condensation of iminoaspartate with dihydroxyacetone phosphate to form quinolinate. This is Quinolinate synthase from Bacillus thuringiensis subsp. konkukian (strain 97-27).